We begin with the raw amino-acid sequence, 301 residues long: Glycine--tRNA ligase alpha subunit (301 aa).

Belongs to the class-II aminoacyl-tRNA synthetase family. In terms of assembly, tetramer of two alpha and two beta subunits.

The protein localises to the cytoplasm. The catalysed reaction is tRNA(Gly) + glycine + ATP = glycyl-tRNA(Gly) + AMP + diphosphate. This is Glycine--tRNA ligase alpha subunit from Polaromonas sp. (strain JS666 / ATCC BAA-500).